Consider the following 152-residue polypeptide: Ribosome maturation factor RimP (152 aa).

This sequence belongs to the RimP family.

The protein resides in the cytoplasm. In terms of biological role, required for maturation of 30S ribosomal subunits. The chain is Ribosome maturation factor RimP from Desulfitobacterium hafniense (strain Y51).